A 654-amino-acid polypeptide reads, in one-letter code: Tetratricopeptide repeat protein 30 homolog (654 aa).

TPR repeat units follow at residues 10 to 43 (EGHV…ANTR), 44 to 76 (AGLS…APKE), 143 to 176 (ADTL…GGFN), 178 to 210 (LVAY…GVRN), 384 to 417 (LAAK…YLPV), 449 to 483 (AVWR…HSDD), and 533 to 566 (CIVN…GAGG).

It belongs to the TTC30/dfy-1/fleer family.

It localises to the cell projection. The protein localises to the cilium. Required for polyglutamylation of axonemal tubulin in sensory cilia. Plays a role in anterograde intraflagellar transport (IFT), the process by which cilia precursors are transported from the base of the cilium to the site of their incorporation at the tip. The chain is Tetratricopeptide repeat protein 30 homolog from Drosophila pseudoobscura pseudoobscura (Fruit fly).